Here is a 956-residue protein sequence, read N- to C-terminus: uncharacterized protein (956 aa).

Residues 40-141 (PATKVSIDKI…IYCMTKAREA (102 aa)) enclose the Fibronectin type-III domain. 2 disordered regions span residues 152–173 (RNTI…PAPL) and 488–600 (NNGD…SYSH). Polar residues-rich tracts occupy residues 153-165 (NTIT…QPRN) and 488-523 (NNGD…SRTG). Thr-154 is subject to Phosphothreonine. Residues Ser-501 and Ser-520 each carry the phosphoserine modification. A compositionally biased stretch (low complexity) spans 524–543 (SIDLISNNNKSINNSNADSA). Residues 552 to 563 (VSYSPSNEPIQP) are compositionally biased toward polar residues. Residues 564–574 (SSSLLSQLTQD) show a composition bias toward low complexity. The segment covering 578–599 (RSMLSNHISSNNENKQQPSSYS) has biased composition (polar residues). 3 positions are modified to phosphoserine: Ser-802, Ser-842, and Ser-895. Positions 875–956 (VGPKVPAKEP…NLFNPHSHDS (82 aa)) are disordered. Residues 895–904 (SNSSISSAWS) show a composition bias toward low complexity.

This is an uncharacterized protein from Saccharomyces cerevisiae (strain ATCC 204508 / S288c) (Baker's yeast).